The chain runs to 947 residues: Beta-glucosidase (947 aa).

D696 is a catalytic residue.

Belongs to the glycosyl hydrolase 3 family.

It catalyses the reaction Hydrolysis of terminal, non-reducing beta-D-glucosyl residues with release of beta-D-glucose.. Its pathway is glycan metabolism; cellulose degradation. This is Beta-glucosidase from Ruminococcus albus.